A 612-amino-acid chain; its full sequence is uncharacterized protein (612 aa).

Positions C6–C32 form a DNA-binding region, zn(2)-C6 fungal-type.

The protein resides in the cytoplasm. It localises to the nucleus. This is an uncharacterized protein from Schizosaccharomyces pombe (strain 972 / ATCC 24843) (Fission yeast).